A 204-amino-acid polypeptide reads, in one-letter code: ATP synthase subunit b 2 (204 aa).

The disordered stretch occupies residues 8-28 (AQSSTTEGAEAHDAAAAGEVH). Residues 56-76 (LLWLAITFGLFYLLMSKVIIP) form a helical membrane-spanning segment.

The protein belongs to the ATPase B chain family. As to quaternary structure, F-type ATPases have 2 components, F(1) - the catalytic core - and F(0) - the membrane proton channel. F(1) has five subunits: alpha(3), beta(3), gamma(1), delta(1), epsilon(1). F(0) has three main subunits: a(1), b(2) and c(10-14). The alpha and beta chains form an alternating ring which encloses part of the gamma chain. F(1) is attached to F(0) by a central stalk formed by the gamma and epsilon chains, while a peripheral stalk is formed by the delta and b chains.

It is found in the cell inner membrane. In terms of biological role, f(1)F(0) ATP synthase produces ATP from ADP in the presence of a proton or sodium gradient. F-type ATPases consist of two structural domains, F(1) containing the extramembraneous catalytic core and F(0) containing the membrane proton channel, linked together by a central stalk and a peripheral stalk. During catalysis, ATP synthesis in the catalytic domain of F(1) is coupled via a rotary mechanism of the central stalk subunits to proton translocation. Component of the F(0) channel, it forms part of the peripheral stalk, linking F(1) to F(0). The b'-subunit is a diverged and duplicated form of b found in plants and photosynthetic bacteria. The polypeptide is ATP synthase subunit b 2 (atpF2) (Rhizobium meliloti (strain 1021) (Ensifer meliloti)).